Consider the following 454-residue polypeptide: DNA primase small subunit (454 aa).

Active-site residues include E66, D131, and D133. Positions 131 and 133 each coordinate Mg(2+). Mn(2+)-binding residues include D131 and D133. 131–133 is an a ribonucleoside 5'-triphosphate binding site; sequence DID. Zn(2+) is bound by residues C143, C144, C150, and C153. Residues 143–153 carry the Zinc knuckle motif motif; the sequence is CCSKTNICEKC. 182–188 provides a ligand contact to a ribonucleoside 5'-triphosphate; it reads SGRRGIH. Residue D333 participates in Mg(2+) binding. Mn(2+) is bound at residue D333. A ribonucleoside 5'-triphosphate is bound at residue 342–345; that stretch reads HLLK. The interval 385 to 420 is disordered; sequence DKNSQNDNGHGPTMETNTTENQKDNARGQSNKGHGF. Polar residues-rich tracts occupy residues 389 to 404 and 411 to 420; these read QNDN…NTTE and RGQSNKGHGF.

Belongs to the eukaryotic-type primase small subunit family. In terms of assembly, heterodimer of a catalytic subunit spp1/pri1 and a regulatory subunit spp2/pri2, also known as the DNA primase complex. Component of the alpha DNA polymerase complex (also known as the alpha DNA polymerase-primase complex) consisting of four subunits: the catalytic subunit pol1, the accessory subunit spb70/pol12, and the primase complex subunits spp1/pri1 and spp2/pri2 respectively. Requires Mg(2+) as cofactor. The cofactor is Mn(2+).

The protein localises to the nucleus. It catalyses the reaction ssDNA + n NTP = ssDNA/pppN(pN)n-1 hybrid + (n-1) diphosphate.. Catalytic subunit of the DNA primase complex and component of the DNA polymerase alpha complex (also known as the alpha DNA polymerase-primase complex - primosome/replisome) which play an essential role in the initiation of DNA synthesis. During the S phase of the cell cycle, the DNA polymerase alpha complex (composed of a catalytic subunit pol1, an accessory subunit spb70/pol12 and two primase subunits, the catalytic subunit spp1/pri1 and the regulatory subunit spp2/pri2) is recruited to DNA at the replicative forks. The primase subunit of the polymerase alpha complex initiates DNA synthesis by oligomerising short RNA primers on both leading and lagging strands. This chain is DNA primase small subunit, found in Schizosaccharomyces pombe (strain 972 / ATCC 24843) (Fission yeast).